The chain runs to 304 residues: D-alanine--D-alanine ligase (304 aa).

The ATP-grasp domain occupies 99 to 293 (KKILRYEGIE…YSKLLDMIIE (195 aa)). 126–181 (LDKLGFPLVVKPNSGGSSVGVKIVYDKDELISMLETVFEWDSEVVIEKYIKGEEIT) is a binding site for ATP. The Mg(2+) site is built by aspartate 248, glutamate 260, and asparagine 262.

This sequence belongs to the D-alanine--D-alanine ligase family. Mg(2+) is required as a cofactor. The cofactor is Mn(2+).

It is found in the cytoplasm. The enzyme catalyses 2 D-alanine + ATP = D-alanyl-D-alanine + ADP + phosphate + H(+). Its pathway is cell wall biogenesis; peptidoglycan biosynthesis. Cell wall formation. The polypeptide is D-alanine--D-alanine ligase (Bacillus anthracis (strain A0248)).